The sequence spans 488 residues: UDP-N-acetylmuramate--L-alanine ligase (488 aa).

127–133 is a binding site for ATP; that stretch reads GTHGKTT.

Belongs to the MurCDEF family.

It is found in the cytoplasm. It carries out the reaction UDP-N-acetyl-alpha-D-muramate + L-alanine + ATP = UDP-N-acetyl-alpha-D-muramoyl-L-alanine + ADP + phosphate + H(+). It participates in cell wall biogenesis; peptidoglycan biosynthesis. In terms of biological role, cell wall formation. This is UDP-N-acetylmuramate--L-alanine ligase from Shewanella oneidensis (strain ATCC 700550 / JCM 31522 / CIP 106686 / LMG 19005 / NCIMB 14063 / MR-1).